An 88-amino-acid chain; its full sequence is uncharacterized protein (88 aa).

2 helical membrane passes run 5 to 25 and 36 to 56; these read AIPF…LLFV and CYYL…VMIF.

The protein localises to the membrane. This is an uncharacterized protein from Saccharomyces cerevisiae (strain ATCC 204508 / S288c) (Baker's yeast).